Here is a 448-residue protein sequence, read N- to C-terminus: Ribulose bisphosphate carboxylase large chain (448 aa).

The residue at position 4 (Lys4) is an N6,N6,N6-trimethyllysine. 2 residues coordinate substrate: Asn113 and Thr163. Catalysis depends on Lys165, which acts as the Proton acceptor. Lys167 serves as a coordination point for substrate. Positions 191, 193, and 194 each coordinate Mg(2+). At Lys191 the chain carries N6-carboxylysine. The active-site Proton acceptor is the His284. Substrate is bound by residues Arg285, His317, and Ser369.

Belongs to the RuBisCO large chain family. Type I subfamily. Heterohexadecamer of 8 large chains and 8 small chains; disulfide-linked. The disulfide link is formed within the large subunit homodimers. It depends on Mg(2+) as a cofactor. The disulfide bond which can form in the large chain dimeric partners within the hexadecamer appears to be associated with oxidative stress and protein turnover.

It localises to the plastid. Its subcellular location is the chloroplast. It carries out the reaction 2 (2R)-3-phosphoglycerate + 2 H(+) = D-ribulose 1,5-bisphosphate + CO2 + H2O. It catalyses the reaction D-ribulose 1,5-bisphosphate + O2 = 2-phosphoglycolate + (2R)-3-phosphoglycerate + 2 H(+). Its function is as follows. RuBisCO catalyzes two reactions: the carboxylation of D-ribulose 1,5-bisphosphate, the primary event in carbon dioxide fixation, as well as the oxidative fragmentation of the pentose substrate in the photorespiration process. Both reactions occur simultaneously and in competition at the same active site. This Eucryphia lucida (Leatherwood) protein is Ribulose bisphosphate carboxylase large chain.